The primary structure comprises 298 residues: Putative ankyrin repeat-containing protein TP_0502 (298 aa).

ANK repeat units follow at residues 143-172 (CFEE…SAAL), 176-205 (RGTP…PVDQ), 210-239 (RAYS…DPNV), and 243-272 (NGQT…NPYL).

The chain is Putative ankyrin repeat-containing protein TP_0502 from Treponema pallidum (strain Nichols).